The sequence spans 898 residues: Serine/threonine-protein kinase TAO3 (898 aa).

Positions 24-277 (FVGLHEIGHG…SADLLRHDFV (254 aa)) constitute a Protein kinase domain. Residues 30-38 (IGHGSFGAV) and K53 contribute to the ATP site. D147 serves as the catalytic Proton acceptor. The tract at residues 316–374 (TRNGPLTESQEEEEDSEHGSNLSRKMDSLGSNHSIPSMSVSTGSQSSSVSSMQEVLDES) is disordered. Residues 334–351 (GSNLSRKMDSLGSNHSIP) show a composition bias toward polar residues. A compositionally biased stretch (low complexity) spans 352–368 (SMSVSTGSQSSSVSSMQ). 3 coiled-coil regions span residues 452–502 (EQEN…THAN), 548–649 (FLES…HAML), and 754–875 (LKSL…IETF). The segment at 565–596 (EEMNEDHSTPKKEKQERISKHKENLQHTQAEE) is disordered.

It belongs to the protein kinase superfamily. STE Ser/Thr protein kinase family. STE20 subfamily.

The protein resides in the cytoplasm. Its subcellular location is the cell membrane. The protein localises to the membrane raft. It is found in the lipid droplet. It carries out the reaction L-seryl-[protein] + ATP = O-phospho-L-seryl-[protein] + ADP + H(+). The catalysed reaction is L-threonyl-[protein] + ATP = O-phospho-L-threonyl-[protein] + ADP + H(+). Its function is as follows. Serine/threonine-protein kinase that acts as a regulator of the p38/MAPK14 stress-activated MAPK cascade and of the MAPK8/JNK cascade. In response to DNA damage, involved in the G2/M transition DNA damage checkpoint by activating the p38/MAPK14 stress-activated MAPK cascade, probably by mediating phosphorylation of upstream MAP kinase kinases. Inhibits basal activity of the MAPK8/JNK cascade. This Gallus gallus (Chicken) protein is Serine/threonine-protein kinase TAO3 (TAOK3).